A 315-amino-acid chain; its full sequence is DNA-directed RNA polymerase subunit alpha (315 aa).

The interval 1-228 (MLEIEKPKIE…EHFKLFMTLT (228 aa)) is alpha N-terminal domain (alpha-NTD). The interval 245-315 (KEKVLEMTIE…LGLGLKKSDE (71 aa)) is alpha C-terminal domain (alpha-CTD).

It belongs to the RNA polymerase alpha chain family. As to quaternary structure, homodimer. The RNAP catalytic core consists of 2 alpha, 1 beta, 1 beta' and 1 omega subunit. When a sigma factor is associated with the core the holoenzyme is formed, which can initiate transcription.

The catalysed reaction is RNA(n) + a ribonucleoside 5'-triphosphate = RNA(n+1) + diphosphate. In terms of biological role, DNA-dependent RNA polymerase catalyzes the transcription of DNA into RNA using the four ribonucleoside triphosphates as substrates. This Clostridium novyi (strain NT) protein is DNA-directed RNA polymerase subunit alpha.